Consider the following 528-residue polypeptide: UDP-glucuronosyltransferase 2A2 (528 aa).

The signal sequence occupies residues 1-21 (MIKKVLQLLIFHLTLAEIVLS). Residues 22–494 (GNVVVWPTDG…FQYHSLDVIG (473 aa)) lie on the Extracellular side of the membrane. Asparagine 48 and asparagine 314 each carry an N-linked (GlcNAc...) asparagine glycan. The chain crosses the membrane as a helical span at residues 495–515 (FLLACVASAILLVAKCCLFIF). Over 516-528 (QKVGKTGKKKKRD) the chain is Cytoplasmic.

Belongs to the UDP-glycosyltransferase family.

It is found in the membrane. It catalyses the reaction glucuronate acceptor + UDP-alpha-D-glucuronate = acceptor beta-D-glucuronoside + UDP + H(+). It carries out the reaction 17alpha-estradiol + UDP-alpha-D-glucuronate = 17alpha-estradiol 3-O-(beta-D-glucuronate) + UDP + H(+). The enzyme catalyses 17beta-estradiol + UDP-alpha-D-glucuronate = 17beta-estradiol 3-O-(beta-D-glucuronate) + UDP + H(+). The catalysed reaction is chenodeoxycholate + UDP-alpha-D-glucuronate = chenodeoxycholoyl-24-O-(beta-D-glucuronate) + UDP. It catalyses the reaction lithocholate + UDP-alpha-D-glucuronate = lithocholoyl-24-O-(beta-D-glucuronate) + UDP. It carries out the reaction deoxycholate + UDP-alpha-D-glucuronate = deoxycholoyl-24-O-(beta-D-glucuronate) + UDP. The enzyme catalyses hyocholate + UDP-alpha-D-glucuronate = hyocholoyl-24-O-(beta-D-glucuronate) + UDP. The catalysed reaction is hyodeoxycholate + UDP-alpha-D-glucuronate = hyodeoxycholate 6-O-(beta-D-glucuronate) + UDP + H(+). In terms of biological role, UDP-glucuronosyltransferase (UGT) that catalyzes phase II biotransformation reactions in which lipophilic substrates are conjugated with glucuronic acid to increase the metabolite's water solubility, thereby facilitating excretion into either the urine or bile. Essential for the elimination and detoxification of drugs, xenobiotics and endogenous compounds. Catalyzes the glucuronidation of endogenous estrogen hormone estradiol. Contributes to bile acid (BA) detoxification by catalyzing the glucuronidation of BA substrates, which are natural detergents for dietary lipids absorption. Potential role in detoxification of toxic waste compounds in the amniotic fluid before birth, and air-born chemical after birth. This Mus musculus (Mouse) protein is UDP-glucuronosyltransferase 2A2.